Consider the following 352-residue polypeptide: Phosphatidylglycerol--prolipoprotein diacylglyceryl transferase (352 aa).

The next 4 membrane-spanning stretches (helical) occupy residues 20–40 (WYGLSYMMGFICAYILITWLA), 55–75 (FITYAAIGTLVGGRLGYVLFY), 97–117 (EGGMASHGGIIGIVIACLLYA), and 122–142 (VNSLYLLDLVAVTGPIGVFFG). An a 1,2-diacyl-sn-glycero-3-phospho-(1'-sn-glycerol)-binding site is contributed by R143. The next 3 membrane-spanning stretches (helical) occupy residues 248-268 (SQLFAAFGEGLLIFMFLFFLW), 275-295 (GFIAACFVLIYAVVRVVDEHF), and 314-334 (WLSLAMFVVGLILMVVWTRAA).

It belongs to the Lgt family.

It is found in the cell inner membrane. The catalysed reaction is L-cysteinyl-[prolipoprotein] + a 1,2-diacyl-sn-glycero-3-phospho-(1'-sn-glycerol) = an S-1,2-diacyl-sn-glyceryl-L-cysteinyl-[prolipoprotein] + sn-glycerol 1-phosphate + H(+). It participates in protein modification; lipoprotein biosynthesis (diacylglyceryl transfer). Functionally, catalyzes the transfer of the diacylglyceryl group from phosphatidylglycerol to the sulfhydryl group of the N-terminal cysteine of a prolipoprotein, the first step in the formation of mature lipoproteins. The chain is Phosphatidylglycerol--prolipoprotein diacylglyceryl transferase from Bdellovibrio bacteriovorus (strain ATCC 15356 / DSM 50701 / NCIMB 9529 / HD100).